The primary structure comprises 142 residues: Succinate dehydrogenase subunit 6, mitochondrial (142 aa).

Glycine 2 is modified (N-acetylglycine).

Component of complex II composed of eight subunits in plants: four classical SDH subunits SDH1, SDH2, SDH3 and SDH4 (a flavoprotein (FP), an iron-sulfur protein (IP), and a cytochrome b composed of a large and a small subunit.), as well as four subunits unknown in mitochondria from bacteria and heterotrophic eukaryotes.

The protein localises to the mitochondrion inner membrane. It participates in carbohydrate metabolism; tricarboxylic acid cycle. This Arabidopsis thaliana (Mouse-ear cress) protein is Succinate dehydrogenase subunit 6, mitochondrial.